Reading from the N-terminus, the 254-residue chain is Mitochondrial inner membrane protease ATP23 homolog (254 aa).

The tract at residues 1 to 32 is disordered; the sequence is MAQSGAKAADLSREPPGEQKPSPSSRQNEEDL. His-133 serves as a coordination point for a divalent metal cation. Glu-134 is an active-site residue. His-137 contributes to the a divalent metal cation binding site.

The protein belongs to the peptidase M76 family.

The sequence is that of Mitochondrial inner membrane protease ATP23 homolog (atp23) from Danio rerio (Zebrafish).